The primary structure comprises 105 residues: Secreted effector protein PINE1 (105 aa).

Residues Met1–Ala21 form the signal peptide.

As to quaternary structure, interacts with Arabidopsis thaliana PGIP1.

It is found in the secreted. In terms of biological role, effector protein required for full virulence. Directly interacts with and functionally inactivates PG-inhibiting proteins (PGIPs). PGIPs are a defense mechanism of infected plants, that inhibit the plant pathogens secreted polygalacturonases (PGs) used to degrade the plant cell wall. Excerts its function by interacting with host PGIPs to negate their polygalacturonase-inhibiting function via enhanced dissociation of PGIPs from PGs. This Sclerotinia sclerotiorum (strain ATCC 18683 / 1980 / Ss-1) (White mold) protein is Secreted effector protein PINE1.